The primary structure comprises 107 residues: Thioredoxin-1 (107 aa).

The region spanning 2–106 (ASVRTMTDFH…LTNMMAKLVK (105 aa)) is the Thioredoxin domain. Catalysis depends on nucleophile residues C31 and C34. C31 and C34 are joined by a disulfide.

This sequence belongs to the thioredoxin family.

It localises to the nucleus. In terms of biological role, participates in various redox reactions through the reversible oxidation of its active center dithiol to a disulfide and catalyzes dithiol-disulfide exchange reactions. As a reducing substrate of peroxiredoxin 1, thioredoxin 2 is preferred over thioredoxin 1. Required for female meiosis and early embryonic development. In Drosophila yakuba (Fruit fly), this protein is Thioredoxin-1 (dhd).